The following is a 70-amino-acid chain: Large ribosomal subunit protein bL31 (70 aa).

The Zn(2+) site is built by Cys16, Cys18, Cys37, and Cys40.

Belongs to the bacterial ribosomal protein bL31 family. Type A subfamily. Part of the 50S ribosomal subunit. Zn(2+) serves as cofactor.

Functionally, binds the 23S rRNA. The protein is Large ribosomal subunit protein bL31 of Shewanella amazonensis (strain ATCC BAA-1098 / SB2B).